The sequence spans 527 residues: UDP-glucuronosyltransferase 2A1 (527 aa).

Positions 1 to 20 (MLNNLLLFSLQISLIGTTLG) are cleaved as a signal peptide. The Lumenal portion of the chain corresponds to 21 to 491 (GNVLIWPMEG…TWFQYHSLDV (471 aa)). Asparagine 49, leucine 313, and asparagine 347 each carry an N-linked (GlcNAc...) asparagine glycan. The helical transmembrane segment at 492 to 512 (IGFLLVCVTTAIFLVIQCCLF) threads the bilayer. Over 513–527 (SCQKFGKIGKKKKRE) the chain is Cytoplasmic.

Belongs to the UDP-glycosyltransferase family. Olfactory epithelium, brain and fetal lung. Not present in liver.

The protein resides in the membrane. The protein localises to the endoplasmic reticulum membrane. It carries out the reaction glucuronate acceptor + UDP-alpha-D-glucuronate = acceptor beta-D-glucuronoside + UDP + H(+). It catalyses the reaction 16beta,17beta-estriol + UDP-alpha-D-glucuronate = 16beta,17beta-estriol 16-O-(beta-D-glucuronate) + UDP + H(+). The enzyme catalyses 16alpha,17alpha-estriol + UDP-alpha-D-glucuronate = 16alpha,17alpha-estriol 16-O-(beta-D-glucuronate) + UDP + H(+). The catalysed reaction is 17alpha-estradiol + UDP-alpha-D-glucuronate = 17alpha-estradiol 17-O-(beta-D-glucuronate) + UDP + H(+). It carries out the reaction 17alpha-estradiol + UDP-alpha-D-glucuronate = 17alpha-estradiol 3-O-(beta-D-glucuronate) + UDP + H(+). It catalyses the reaction 17beta-estradiol + UDP-alpha-D-glucuronate = 17beta-estradiol 3-O-(beta-D-glucuronate) + UDP + H(+). The enzyme catalyses 17beta-estradiol + UDP-alpha-D-glucuronate = 17beta-estradiol 17-O-(beta-D-glucuronate) + UDP + H(+). The catalysed reaction is testosterone + UDP-alpha-D-glucuronate = testosterone 17-O-(beta-D-glucuronate) + UDP + H(+). It carries out the reaction epitestosterone + UDP-alpha-D-glucuronate = epitestosterone 17-O-(beta-D-glucuronate) + UDP + H(+). It catalyses the reaction lithocholate + UDP-alpha-D-glucuronate = lithocholoyl-3-O-(beta-D-glucuronate) + UDP + H(+). The enzyme catalyses lithocholate + UDP-alpha-D-glucuronate = lithocholoyl-24-O-(beta-D-glucuronate) + UDP. The catalysed reaction is deoxycholate + UDP-alpha-D-glucuronate = deoxycholoyl-24-O-(beta-D-glucuronate) + UDP. It carries out the reaction hyodeoxycholate + UDP-alpha-D-glucuronate = hyodeoxycholoyl-24-O-(beta-D-glucuronate) + UDP. It catalyses the reaction hyocholate + UDP-alpha-D-glucuronate = hyocholoyl-24-O-(beta-D-glucuronate) + UDP. Its function is as follows. UDP-glucuronosyltransferase (UGT) that catalyzes phase II biotransformation reactions in which lipophilic substrates are conjugated with glucuronic acid to increase the metabolite's water solubility, thereby facilitating excretion into either the urine or bile. Essential for the elimination and detoxification of drugs, xenobiotics and endogenous compounds. Catalyzes the glucuronidation of endogenous steroid hormones such as androgens (testosterone and epitestosterone) and estrogens (estradiol and epiestriol). Contributes to bile acid (BA) detoxification by catalyzing the glucuronidation of BA substrates, which are natural detergents for dietary lipids absorption. Shows a high affinity to aliphatic odorants such as citronellol as well as olfactory tissue specificity, and therefore may be involved in olfaction. Shows a potential role in detoxification of toxic waste compounds in the amniotic fluid before birth, and air-born chemical after birth. The chain is UDP-glucuronosyltransferase 2A1 from Homo sapiens (Human).